A 450-amino-acid polypeptide reads, in one-letter code: MFS-type transporter avaK (450 aa).

The next 8 helical transmembrane spans lie at 18 to 38, 100 to 120, 148 to 168, 171 to 191, 244 to 264, 280 to 300, 329 to 349, and 408 to 428; these read VMAL…LSMP, RVVC…SGLL, AVAL…AAPA, ALVA…MLFV, APII…HFLL, LVLV…MPAA, FGFF…ALAF, and GWLG…LVAV.

The protein belongs to the major facilitator superfamily.

The protein localises to the membrane. The protein operates within secondary metabolite biosynthesis. In terms of biological role, MFS-type transporter; part of the cluster that mediates the biosynthesis of a highly modified cyclo-arginine-tryptophan dipeptide (cRW). This Aspergillus versicolor protein is MFS-type transporter avaK.